We begin with the raw amino-acid sequence, 50 residues long: Defensin-like protein 1 (50 aa).

4 cysteine pairs are disulfide-bonded: cysteine 3–cysteine 50, cysteine 14–cysteine 35, cysteine 20–cysteine 44, and cysteine 24–cysteine 46.

Belongs to the DEFL family.

The protein localises to the secreted. Functionally, possesses antimicrobial activity sensitive to inorganic cations. Has no inhibitory effect on insect gut alpha-amylase. Induces potential changes in fungal membranes and increased K+ efflux and Ca(2+) uptake. Interacts with sphingolipids and ergosterols found in fungal plasma membranes. In Dahlia merckii (Bedding dahlia), this protein is Defensin-like protein 1.